We begin with the raw amino-acid sequence, 104 residues long: NADH-quinone oxidoreductase subunit K (104 aa).

3 helical membrane-spanning segments follow: residues 4-24 (VPASAYLTLAIILFCIGLFGA), 31-51 (VIVLVCIELMLNAANLNLVAF), and 67-87 (LFTMSVAAAEAAVGLAILIAL).

The protein belongs to the complex I subunit 4L family. As to quaternary structure, NDH-1 is composed of 14 different subunits. Subunits NuoA, H, J, K, L, M, N constitute the membrane sector of the complex.

It localises to the cell membrane. It carries out the reaction a quinone + NADH + 5 H(+)(in) = a quinol + NAD(+) + 4 H(+)(out). NDH-1 shuttles electrons from NADH, via FMN and iron-sulfur (Fe-S) centers, to quinones in the respiratory chain. The immediate electron acceptor for the enzyme in this species is believed to be a menaquinone. Couples the redox reaction to proton translocation (for every two electrons transferred, four hydrogen ions are translocated across the cytoplasmic membrane), and thus conserves the redox energy in a proton gradient. The chain is NADH-quinone oxidoreductase subunit K from Bacillus mycoides (strain KBAB4) (Bacillus weihenstephanensis).